Here is a 186-residue protein sequence, read N- to C-terminus: uncharacterized protein (186 aa).

The next 4 helical transmembrane spans lie at 5-25, 39-59, 62-82, and 122-142; these read LIAC…FEDI, IITI…KLFA, NLLF…ILLF, and GFFE…IALM.

The protein localises to the cell membrane. This is an uncharacterized protein from Borreliella burgdorferi (strain ATCC 35210 / DSM 4680 / CIP 102532 / B31) (Borrelia burgdorferi).